A 776-amino-acid chain; its full sequence is MDPKDLLKPSSGSPAVRGSPHYNDKPGNVIEFFGNYRGGVSVSVSASCPTSTASQSNTRQQQHFQKQLTATGDSTNGLNNNVPQPDLSKAVSLSMGLYMGESDTKVMSSDIAFPSQEQIGISTGETDFSLLEESIANLQAKSLAPDKLIEISEDPGGFKCDISAQPRPSMGQGGSNGSSSTNLFPKDQCTFDLLRDLGISPDSPLDGKSNPWLDPLFDEQEAFNLLSPLGTGDPFFMKSEVLSEGSKTLSLEDGTQRLGDHAKDMLLPSADRPISQVKTEKEDYIELCTPGVVNEEKFGPVYCVGNFSGSGLFGNKSSAISVHGVSTSGGQMYHYDLNTATISQQDVKPVFNLGSPGTSIAEGWNRCHGSGNDTAASPGNVNFPNRSVFSNGYSSPGIRSDASPSPSTSSTSTGPPPKLCLVCSDEASGCHYGVLTCGSCKVFFKRAVEGQHNYLCAGRNDCIIDKIRRKNCPACRYRKCLQAGMNLEARKTKKKIKGIQQSTTATARESPETSMTRTLVPASVAQLTPTLISLLEVIEPEVLYSGYDSSIPDTTRRLMSSLNMLGGRQVVSAVRWAKAIPGFRNLHLDDQMTLLQYSWMFLMVFALGWRSYKQTNGSILYFAPDLVITEDRMHLPFMQERCQEMLKIAGEMSSLQISYDEYLCMKVLLLMCTIPKEGLKSHALFEEIRMTYIKELGKAIVKREGNSSQNWQRFYQLTKLLDSMHEVAENLLAFCFLSFLDKSMSIEFPDMLSEIISNQIPKYSSGNLKKLLFHQK.

Disordered stretches follow at residues 1–25, 47–86, and 394–415; these read MDPK…YNDK, SCPT…PQPD, and SSPG…STGP. The interval 1-419 is modulating; that stretch reads MDPKDLLKPS…STSTGPPPKL (419 aa). Residues 47 to 83 show a composition bias toward polar residues; that stretch reads SCPTSTASQSNTRQQQHFQKQLTATGDSTNGLNNNVP. Positions 403–413 are enriched in low complexity; sequence SPSPSTSSTST. NR C4-type zinc fingers lie at residues 420 to 440 and 456 to 480; these read CLVC…CGSC and CAGR…YRKC. Residues 420-485 constitute a DNA-binding region (nuclear receptor); it reads CLVCSDEASG…RYRKCLQAGM (66 aa). A hinge region spans residues 486 to 522; sequence NLEARKTKKKIKGIQQSTTATARESPETSMTRTLVPA. The 235-residue stretch at 523 to 757 folds into the NR LBD domain; the sequence is SVAQLTPTLI…FPDMLSEIIS (235 aa).

Belongs to the nuclear hormone receptor family. NR3 subfamily. In terms of assembly, heteromultimeric cytoplasmic complex with HSP90. Upon ligand binding the complex undergoes a conformation change and moves to the nucleus, where it dissociates. Binds to DNA as a homodimer, and as heterodimer with NR3C2. Interaction with numerous other transcription factors modulates transcription activation. In terms of tissue distribution, expressed in liver with relative abundance.

Its subcellular location is the cytoplasm. The protein resides in the nucleus. It is found in the mitochondrion. It localises to the cytoskeleton. The protein localises to the spindle. Its subcellular location is the microtubule organizing center. The protein resides in the centrosome. Its function is as follows. Receptor for glucocorticoids (GC). Has a dual mode of action: as a transcription factor that binds to glucocorticoid response elements (GRE), both for nuclear and mitochondrial DNA, and as a modulator of other transcription factors. Affects inflammatory responses, cellular proliferation and differentiation in target tissues. Involved in chromatin remodeling. Plays a role in rapid mRNA degradation by binding to the 5' UTR of target mRNAs and interacting with PNRC2 in a ligand-dependent manner which recruits the RNA helicase UPF1 and the mRNA-decapping enzyme DCP1A, leading to RNA decay. Could act as a coactivator for STAT5-dependent transcription upon growth hormone (GH) stimulation and could reveal an essential role of hepatic GR in the control of body growth. Mediates glucocorticoid-induced apoptosis. Promotes accurate chromosome segregation during mitosis. May act as a tumor suppressor. May play a negative role in adipogenesis through the regulation of lipolytic and antilipogenic gene expression. In Xenopus laevis (African clawed frog), this protein is Glucocorticoid receptor (nr3c1).